The chain runs to 535 residues: PAC-1 interacting and coiled-coil domain-containing protein 1 (535 aa).

The interval Met1–Ile67 is disordered. Residues Ser36–Thr57 show a composition bias toward low complexity. 2 coiled-coil regions span residues Lys109–Ser172 and Ser198–Leu242. Disordered regions lie at residues Asn254–Glu277 and Thr503–Asn535. The segment covering Thr503 to Lys525 has biased composition (polar residues). A compositionally biased stretch (low complexity) spans Asn526 to Asn535.

This sequence belongs to the CCDC85 family. Interacts with pac-1 and jac-1.

It is found in the cell junction. The protein localises to the adherens junction. Linker protein which helps to recruit the Rho GTPase-activating protein, pac-1, to adherens junctions. This chain is PAC-1 interacting and coiled-coil domain-containing protein 1, found in Caenorhabditis elegans.